The sequence spans 380 residues: Cytochrome b (380 aa).

4 helical membrane-spanning segments follow: residues 34-54 (FGSLLGICLATQILTGLLLAA), 78-99 (WLIRNLHANGASFFFICIYLHI), 114-134 (WNTGVILLLTLMATAFVGYVL), and 179-199 (FFTLHFLLPFMIMGLTLIHLT). Positions 84 and 98 each coordinate heme b. Residues H183 and H197 each contribute to the heme b site. H202 contributes to the a ubiquinone binding site. A run of 4 helical transmembrane segments spans residues 227–247 (LKDILGFMLMLLPLMTLALFS), 289–309 (LGGVLALAASVLILFLAPLLH), 321–341 (FSQLLFWTLTANLLILTWVGS), and 348–368 (FIIIGQLASLTYFTILLILFP).

The protein belongs to the cytochrome b family. The cytochrome bc1 complex contains 11 subunits: 3 respiratory subunits (MT-CYB, CYC1 and UQCRFS1), 2 core proteins (UQCRC1 and UQCRC2) and 6 low-molecular weight proteins (UQCRH/QCR6, UQCRB/QCR7, UQCRQ/QCR8, UQCR10/QCR9, UQCR11/QCR10 and a cleavage product of UQCRFS1). This cytochrome bc1 complex then forms a dimer. Heme b serves as cofactor.

It localises to the mitochondrion inner membrane. Component of the ubiquinol-cytochrome c reductase complex (complex III or cytochrome b-c1 complex) that is part of the mitochondrial respiratory chain. The b-c1 complex mediates electron transfer from ubiquinol to cytochrome c. Contributes to the generation of a proton gradient across the mitochondrial membrane that is then used for ATP synthesis. The chain is Cytochrome b (MT-CYB) from Antigone rubicunda (Brolga crane).